We begin with the raw amino-acid sequence, 226 residues long: Leucyl/phenylalanyl-tRNA--protein transferase (226 aa).

Belongs to the L/F-transferase family.

The protein resides in the cytoplasm. It catalyses the reaction N-terminal L-lysyl-[protein] + L-leucyl-tRNA(Leu) = N-terminal L-leucyl-L-lysyl-[protein] + tRNA(Leu) + H(+). The enzyme catalyses N-terminal L-arginyl-[protein] + L-leucyl-tRNA(Leu) = N-terminal L-leucyl-L-arginyl-[protein] + tRNA(Leu) + H(+). It carries out the reaction L-phenylalanyl-tRNA(Phe) + an N-terminal L-alpha-aminoacyl-[protein] = an N-terminal L-phenylalanyl-L-alpha-aminoacyl-[protein] + tRNA(Phe). Functionally, functions in the N-end rule pathway of protein degradation where it conjugates Leu, Phe and, less efficiently, Met from aminoacyl-tRNAs to the N-termini of proteins containing an N-terminal arginine or lysine. This is Leucyl/phenylalanyl-tRNA--protein transferase from Bradyrhizobium diazoefficiens (strain JCM 10833 / BCRC 13528 / IAM 13628 / NBRC 14792 / USDA 110).